We begin with the raw amino-acid sequence, 268 residues long: MTLLNVSDLSHHYAHGGFSGKHQHQAVLNNVSLTLKSGETVALLGRSGCGKSTLSRLLVGLESPSQGNISWRGESLAKLNRAQRKAFRRDIQMVFQDSISAVNPRKTVREILREPMRHLLSLKKSEQLARASEMLHAVDLDDSVLDKRPPQLSGGQLQRVCLARALAVEPKLLILDEAVSNLDLVLQAGVIRLLKKLQQQFGTACLFITHDLRLVERFCQRVMVMDNGQIVETQAVGEKLTFSSDAGRVLQNAILPAFPVRRRATEKV.

In terms of domain architecture, ABC transporter spans 4–252; sequence LNVSDLSHHY…SSDAGRVLQN (249 aa). 45 to 52 contributes to the ATP binding site; sequence GRSGCGKS.

Belongs to the ABC transporter superfamily. Nickel importer (TC 3.A.1.5.3) family. In terms of assembly, the complex is composed of two ATP-binding proteins (NikD and NikE), two transmembrane proteins (NikB and NikC) and a solute-binding protein (NikA).

The protein resides in the cell inner membrane. The enzyme catalyses Ni(2+)(out) + ATP + H2O = Ni(2+)(in) + ADP + phosphate + H(+). Functionally, part of the ABC transporter complex NikABCDE involved in nickel import. Responsible for energy coupling to the transport system. The sequence is that of Nickel import ATP-binding protein NikE from Escherichia coli O157:H7.